The sequence spans 139 residues: Cellular retinoic acid-binding protein 2 (139 aa).

A Nuclear localization signal motif is present at residues 21 to 31 (KALGVNMMMRK). K103 participates in a covalent cross-link: Glycyl lysine isopeptide (Lys-Gly) (interchain with G-Cter in SUMO). 134 to 136 (RVY) contributes to the all-trans-retinoate binding site.

It belongs to the calycin superfamily. Fatty-acid binding protein (FABP) family. In terms of assembly, interacts with importin alpha, RXR and RARA. Sumoylated in response to retinoic acid binding, sumoylation is critical for dissociation from ER and subsequent nuclear translocation.

The protein resides in the cytoplasm. The protein localises to the endoplasmic reticulum. It localises to the nucleus. Transports retinoic acid to the nucleus. Regulates the access of retinoic acid to the nuclear retinoic acid receptors. This Rattus norvegicus (Rat) protein is Cellular retinoic acid-binding protein 2 (Crabp2).